The chain runs to 361 residues: Phosphoserine aminotransferase (361 aa).

Residue arginine 42 coordinates L-glutamate. Pyridoxal 5'-phosphate-binding positions include 76–77 (AR), tryptophan 102, threonine 153, aspartate 173, and glutamine 196. Position 197 is an N6-(pyridoxal phosphate)lysine (lysine 197). A pyridoxal 5'-phosphate-binding site is contributed by 238-239 (NT).

Belongs to the class-V pyridoxal-phosphate-dependent aminotransferase family. SerC subfamily. As to quaternary structure, homodimer. It depends on pyridoxal 5'-phosphate as a cofactor.

It is found in the cytoplasm. It catalyses the reaction O-phospho-L-serine + 2-oxoglutarate = 3-phosphooxypyruvate + L-glutamate. The catalysed reaction is 4-(phosphooxy)-L-threonine + 2-oxoglutarate = (R)-3-hydroxy-2-oxo-4-phosphooxybutanoate + L-glutamate. It functions in the pathway amino-acid biosynthesis; L-serine biosynthesis; L-serine from 3-phospho-D-glycerate: step 2/3. It participates in cofactor biosynthesis; pyridoxine 5'-phosphate biosynthesis; pyridoxine 5'-phosphate from D-erythrose 4-phosphate: step 3/5. In terms of biological role, catalyzes the reversible conversion of 3-phosphohydroxypyruvate to phosphoserine and of 3-hydroxy-2-oxo-4-phosphonooxybutanoate to phosphohydroxythreonine. The protein is Phosphoserine aminotransferase of Pectobacterium carotovorum subsp. carotovorum (strain PC1).